The following is a 257-amino-acid chain: Transmembrane protein C257L (257 aa).

Helical transmembrane passes span 123-143 and 163-183; these read LELL…FTAL and MMIF…YVLV.

It belongs to the asfivirus C257R family.

The protein resides in the host membrane. It is found in the virion. The sequence is that of Transmembrane protein C257L from African swine fever virus (strain Badajoz 1971 Vero-adapted) (Ba71V).